A 690-amino-acid chain; its full sequence is Methionine--tRNA ligase (690 aa).

Positions 12 to 22 match the 'HIGH' region motif; the sequence is PYANGSIHLGH. 4 residues coordinate Zn(2+): cysteine 143, cysteine 146, cysteine 156, and cysteine 159. Residues 328–332 carry the 'KMSKS' region motif; the sequence is KMSKS. Residue lysine 331 coordinates ATP. In terms of domain architecture, tRNA-binding spans 582 to 690; that stretch reads DFAKVDLRIA…SGAEPGMKVK (109 aa).

Belongs to the class-I aminoacyl-tRNA synthetase family. MetG type 1 subfamily. In terms of assembly, homodimer. Zn(2+) is required as a cofactor.

It is found in the cytoplasm. It catalyses the reaction tRNA(Met) + L-methionine + ATP = L-methionyl-tRNA(Met) + AMP + diphosphate. Functionally, is required not only for elongation of protein synthesis but also for the initiation of all mRNA translation through initiator tRNA(fMet) aminoacylation. This chain is Methionine--tRNA ligase, found in Thiobacillus denitrificans (strain ATCC 25259 / T1).